The following is a 485-amino-acid chain: Glutamyl-tRNA(Gln) amidotransferase subunit A (485 aa).

Active-site charge relay system residues include K78 and S153. S177 acts as the Acyl-ester intermediate in catalysis.

It belongs to the amidase family. GatA subfamily. In terms of assembly, heterotrimer of A, B and C subunits.

The enzyme catalyses L-glutamyl-tRNA(Gln) + L-glutamine + ATP + H2O = L-glutaminyl-tRNA(Gln) + L-glutamate + ADP + phosphate + H(+). Allows the formation of correctly charged Gln-tRNA(Gln) through the transamidation of misacylated Glu-tRNA(Gln) in organisms which lack glutaminyl-tRNA synthetase. The reaction takes place in the presence of glutamine and ATP through an activated gamma-phospho-Glu-tRNA(Gln). The polypeptide is Glutamyl-tRNA(Gln) amidotransferase subunit A (Bacillus cereus (strain 03BB102)).